We begin with the raw amino-acid sequence, 83 residues long: CLAVATA3/ESR (CLE)-related protein 20 (83 aa).

Residues 1–29 (MKNKNMNPSRPRLLCLIVFLFLVIVLSKA) form the signal peptide.

It belongs to the CLV3/ESR signal peptide family. Mostly expressed in roots, seedlings, leaves, flowers, stems and apex, and, to a lower extent, in siliques and pollen.

The protein resides in the secreted. It localises to the extracellular space. Its function is as follows. Extracellular signal peptide that regulates cell fate. Represses root apical meristem maintenance. Inhibits irreversibly root growth by reducing cell division rates in the root apical meristem. Regulates the transition of protophloem cells from proliferation to differentiation, thus impinging on postembryonic growth capacity of the root meristem; this signaling pathway requires CRN and CLV2. The sequence is that of CLAVATA3/ESR (CLE)-related protein 20 from Arabidopsis thaliana (Mouse-ear cress).